Here is a 139-residue protein sequence, read N- to C-terminus: Nucleoside diphosphate kinase (139 aa).

Residues K10, F58, R86, T92, R104, and N114 each coordinate ATP. H117 serves as the catalytic Pros-phosphohistidine intermediate.

It belongs to the NDK family. Homotetramer. The cofactor is Mg(2+).

It localises to the cytoplasm. The enzyme catalyses a 2'-deoxyribonucleoside 5'-diphosphate + ATP = a 2'-deoxyribonucleoside 5'-triphosphate + ADP. The catalysed reaction is a ribonucleoside 5'-diphosphate + ATP = a ribonucleoside 5'-triphosphate + ADP. Major role in the synthesis of nucleoside triphosphates other than ATP. The ATP gamma phosphate is transferred to the NDP beta phosphate via a ping-pong mechanism, using a phosphorylated active-site intermediate. This Rhodococcus jostii (strain RHA1) protein is Nucleoside diphosphate kinase.